We begin with the raw amino-acid sequence, 557 residues long: Dihydroxy-acid dehydratase (557 aa).

Asp78 serves as a coordination point for Mg(2+). A [2Fe-2S] cluster-binding site is contributed by Cys119. Asp120 and Lys121 together coordinate Mg(2+). Lys121 is subject to N6-carboxylysine. A [2Fe-2S] cluster-binding site is contributed by Cys192. Glu442 is a Mg(2+) binding site. Catalysis depends on Ser468, which acts as the Proton acceptor.

This sequence belongs to the IlvD/Edd family. As to quaternary structure, homodimer. The cofactor is [2Fe-2S] cluster. Requires Mg(2+) as cofactor.

It catalyses the reaction (2R)-2,3-dihydroxy-3-methylbutanoate = 3-methyl-2-oxobutanoate + H2O. The enzyme catalyses (2R,3R)-2,3-dihydroxy-3-methylpentanoate = (S)-3-methyl-2-oxopentanoate + H2O. The protein operates within amino-acid biosynthesis; L-isoleucine biosynthesis; L-isoleucine from 2-oxobutanoate: step 3/4. It participates in amino-acid biosynthesis; L-valine biosynthesis; L-valine from pyruvate: step 3/4. Its function is as follows. Functions in the biosynthesis of branched-chain amino acids. Catalyzes the dehydration of (2R,3R)-2,3-dihydroxy-3-methylpentanoate (2,3-dihydroxy-3-methylvalerate) into 2-oxo-3-methylpentanoate (2-oxo-3-methylvalerate) and of (2R)-2,3-dihydroxy-3-methylbutanoate (2,3-dihydroxyisovalerate) into 2-oxo-3-methylbutanoate (2-oxoisovalerate), the penultimate precursor to L-isoleucine and L-valine, respectively. The polypeptide is Dihydroxy-acid dehydratase (Bacillus cytotoxicus (strain DSM 22905 / CIP 110041 / 391-98 / NVH 391-98)).